A 270-amino-acid polypeptide reads, in one-letter code: Protein US2 homolog (270 aa).

The protein belongs to the herpesviridae US2 family.

The polypeptide is Protein US2 homolog (MDV091) (Gallid herpesvirus 2 (strain Chicken/Md5/ATCC VR-987) (GaHV-2)).